The sequence spans 296 residues: Probable AP endonuclease (296 aa).

A disulfide bridge links cysteine 16 with cysteine 20. Zn(2+) is bound by residues histidine 78, histidine 115, glutamate 142, histidine 182, histidine 218, aspartate 231, histidine 233, and glutamate 271.

It belongs to the AP endonuclease 2 family. Zn(2+) serves as cofactor.

Its subcellular location is the host nucleus. It localises to the host cytoplasm. The protein resides in the virion. Endonuclease of the viral base excision repair system that catalyzes DNA cleavage reaction at the apurinic or apyrimidinic sites (AP sites). Cleaves phosphodiester bonds on the 5' side of AP sites. In addition to endonuclease activity, the AP endonuclease has a proofreading 3'-5' exonuclease activity that is considerably more efficient in the elimination of a mismatch than in that of a correctly paired base. Displays 3'-phosphatase and 3'-repair diesterase activities. The single nucleotide gaps generated by the AP endonuclease are filled by the viral repair DNA polymerase X and the DNA ligase. The polypeptide is Probable AP endonuclease (Ornithodoros (relapsing fever ticks)).